Reading from the N-terminus, the 339-residue chain is Glycerol-3-phosphate dehydrogenase [NAD(P)+] (339 aa).

Residues serine 15, tyrosine 16, histidine 36, and lysine 110 each contribute to the NADPH site. Lysine 110, glycine 139, and threonine 141 together coordinate sn-glycerol 3-phosphate. An NADPH-binding site is contributed by alanine 143. The sn-glycerol 3-phosphate site is built by lysine 195, aspartate 248, serine 258, arginine 259, and asparagine 260. The active-site Proton acceptor is lysine 195. NADPH is bound at residue arginine 259. Residues valine 283 and glutamate 285 each coordinate NADPH.

This sequence belongs to the NAD-dependent glycerol-3-phosphate dehydrogenase family.

Its subcellular location is the cytoplasm. It catalyses the reaction sn-glycerol 3-phosphate + NAD(+) = dihydroxyacetone phosphate + NADH + H(+). The enzyme catalyses sn-glycerol 3-phosphate + NADP(+) = dihydroxyacetone phosphate + NADPH + H(+). It participates in membrane lipid metabolism; glycerophospholipid metabolism. Its function is as follows. Catalyzes the reduction of the glycolytic intermediate dihydroxyacetone phosphate (DHAP) to sn-glycerol 3-phosphate (G3P), the key precursor for phospholipid synthesis. The protein is Glycerol-3-phosphate dehydrogenase [NAD(P)+] of Citrobacter koseri (strain ATCC BAA-895 / CDC 4225-83 / SGSC4696).